A 191-amino-acid chain; its full sequence is Leucyl/phenylalanyl-tRNA--protein transferase (191 aa).

Belongs to the L/F-transferase family.

It is found in the cytoplasm. The catalysed reaction is N-terminal L-lysyl-[protein] + L-leucyl-tRNA(Leu) = N-terminal L-leucyl-L-lysyl-[protein] + tRNA(Leu) + H(+). It carries out the reaction N-terminal L-arginyl-[protein] + L-leucyl-tRNA(Leu) = N-terminal L-leucyl-L-arginyl-[protein] + tRNA(Leu) + H(+). The enzyme catalyses L-phenylalanyl-tRNA(Phe) + an N-terminal L-alpha-aminoacyl-[protein] = an N-terminal L-phenylalanyl-L-alpha-aminoacyl-[protein] + tRNA(Phe). In terms of biological role, functions in the N-end rule pathway of protein degradation where it conjugates Leu, Phe and, less efficiently, Met from aminoacyl-tRNAs to the N-termini of proteins containing an N-terminal arginine or lysine. The polypeptide is Leucyl/phenylalanyl-tRNA--protein transferase (Nostoc punctiforme (strain ATCC 29133 / PCC 73102)).